Consider the following 102-residue polypeptide: Small ribosomal subunit protein uS10 (102 aa).

Belongs to the universal ribosomal protein uS10 family. As to quaternary structure, part of the 30S ribosomal subunit.

Involved in the binding of tRNA to the ribosomes. The protein is Small ribosomal subunit protein uS10 of Myxococcus xanthus (strain DK1622).